The sequence spans 119 residues: Large ribosomal subunit protein bL19 (119 aa).

It belongs to the bacterial ribosomal protein bL19 family.

This protein is located at the 30S-50S ribosomal subunit interface and may play a role in the structure and function of the aminoacyl-tRNA binding site. This is Large ribosomal subunit protein bL19 from Idiomarina loihiensis (strain ATCC BAA-735 / DSM 15497 / L2-TR).